Reading from the N-terminus, the 674-residue chain is Pannexin-2 (674 aa).

Topologically, residues 11–53 (MATALLAGEKLRELILPGSQDDKAGALAALLLQLKLELPFDRV) are cytoplasmic. The chain crosses the membrane as a helical span at residues 54–74 (VTIGTVLVPILLVTLVFTKNF). Over 75 to 125 (AEEPIYCYTPHNFTRDQALYARGYCWTELRDALPGVDASLWPSLFEHKFLP) the chain is Extracellular. N-linked (GlcNAc...) asparagine glycosylation is present at N86. Residues 126–146 (YALLAFAAIMYVPALGWEFLA) traverse the membrane as a helical segment. The Cytoplasmic portion of the chain corresponds to 147 to 230 (STRLTSELNF…NFLAKLYLAR (84 aa)). The chain crosses the membrane as a helical span at residues 231–251 (HVLILLLSVVPISYLCTYYAT). The Extracellular segment spans residues 252–295 (QKQNEFTCALGASPDGPVGSAGPTVRVSCKLPSVQLQRIIAGVD). A helical membrane pass occupies residues 296-316 (IVLLCFMNLIILVNLIHLFIF). Residues 317 to 674 (RKSNFIFDKL…PRTVVSTVEF (358 aa)) are Cytoplasmic-facing. Residues 394-408 (TTPTVRDSGIQTVDP) show a composition bias toward polar residues. Disordered regions lie at residues 394–426 (TTPTVRDSGIQTVDPSINPAEPEGSAEPPVVKR) and 485–510 (AHHYKGSGGDTGPSSAPPAASEKKHT). Phosphoserine is present on residues S590 and S601.

This sequence belongs to the pannexin family. Forms PANX1/PANX2-heteromeric intercellular channels on coexpression in paired Xenopus oocytes. Does not form homomeric channels. S-palmitoylated in neural stem and progenitor cells. In terms of processing, cleaved by CASP3 and CASP7 during apoptosis. Cleavage has no effect on it function. Expressed in the eye, thyroid, prostate, kidney and liver. Abundantly expressed in the CNS, including hippocampus, olfactory bulb, cortex, cerebellum. Not detected in the white matter.

The protein localises to the cell membrane. It is found in the golgi apparatus membrane. Its subcellular location is the endoplasmic reticulum membrane. Structural component of the gap junctions and the hemichannels. The protein is Pannexin-2 (Panx2) of Rattus norvegicus (Rat).